The following is a 103-amino-acid chain: Small ribosomal subunit protein uS10 (103 aa).

It belongs to the universal ribosomal protein uS10 family. As to quaternary structure, part of the 30S ribosomal subunit.

Involved in the binding of tRNA to the ribosomes. This chain is Small ribosomal subunit protein uS10, found in Nitratiruptor sp. (strain SB155-2).